The sequence spans 124 residues: Small polypeptide ROTUNDIFOLIA LIKE 3 (124 aa).

The tract at residues 1-23 (MEDERWKLSSSKGRSKSGRSCSS) is disordered. Residues Asn35 and Asn38 are each glycosylated (N-linked (GlcNAc...) asparagine). Residues 59–75 (AWSAAGAGGGGASSSSS) form a helical membrane-spanning segment. Residues 60–95 (WSAAGAGGGGASSSSSSQHQHQQQQQQSNNSQRLSK) are disordered. Residues 71–91 (SSSSSSQHQHQQQQQQSNNSQ) show a composition bias toward low complexity. Asn88 carries N-linked (GlcNAc...) asparagine glycosylation. Residues 92–124 (RLSKKCVEAVKEHRARFYIVRRCVSMLVCWRDY) are required for DVL/RTFL small polypeptide activity.

It belongs to the DVL/RTFL small polypeptides family.

It is found in the cell membrane. In terms of biological role, small polypeptide acting as a regulatory molecule which coordinates cellular responses required for differentiation, growth and development, probably by restricting polar cell proliferation in lateral organs (e.g. leaves and petioles). This chain is Small polypeptide ROTUNDIFOLIA LIKE 3, found in Oryza sativa subsp. japonica (Rice).